The following is a 440-amino-acid chain: Adenylyltransferase and sulfurtransferase UBA4 (440 aa).

Methionine 1 is modified (N-acetylmethionine). ATP-binding positions include glycine 77, aspartate 98, serine 105–arginine 109, lysine 122, and aspartate 166–serine 167. Residues cysteine 208 and cysteine 211 each coordinate Zn(2+). Cysteine 225 (glycyl thioester intermediate; for adenylyltransferase activity) is an active-site residue. Cysteine 286 and cysteine 289 together coordinate Zn(2+). Serine 326 is subject to Phosphoserine. Residues phenylalanine 339–proline 438 enclose the Rhodanese domain. The Cysteine persulfide intermediate; for sulfurtransferase activity role is filled by cysteine 397.

This sequence in the N-terminal section; belongs to the HesA/MoeB/ThiF family. UBA4 subfamily. Zn(2+) is required as a cofactor.

The protein resides in the cytoplasm. The protein localises to the cytosol. It functions in the pathway tRNA modification; 5-methoxycarbonylmethyl-2-thiouridine-tRNA biosynthesis. Functionally, plays a central role in 2-thiolation of mcm(5)S(2)U at tRNA wobble positions of cytosolic tRNA(Lys), tRNA(Glu) and tRNA(Gln). Acts by mediating the C-terminal thiocarboxylation of sulfur carrier URM1. Its N-terminus first activates URM1 as acyl-adenylate (-COAMP), then the persulfide sulfur on the catalytic cysteine is transferred to URM1 to form thiocarboxylation (-COSH) of its C-terminus. The reaction probably involves hydrogen sulfide that is generated from the persulfide intermediate and that acts as a nucleophile towards URM1. Subsequently, a transient disulfide bond is formed. Does not use thiosulfate as sulfur donor; NFS1 probably acting as a sulfur donor for thiocarboxylation reactions. Prior mcm(5) tRNA modification by the elongator complex is required for 2-thiolation. May also be involved in protein urmylation. This Saccharomyces cerevisiae (strain YJM789) (Baker's yeast) protein is Adenylyltransferase and sulfurtransferase UBA4.